We begin with the raw amino-acid sequence, 62 residues long: MTLAFQLAVFALIATSLILLISVPVVFASPDGWSSNKNVVFSGTSLWIGLVFLVGILNSLIS.

A run of 2 helical transmembrane segments spans residues 8 to 28 (AVFALIATSLILLISVPVVFA) and 41 to 61 (FSGTSLWIGLVFLVGILNSLI).

It belongs to the PsbZ family. In terms of assembly, PSII is composed of 1 copy each of membrane proteins PsbA, PsbB, PsbC, PsbD, PsbE, PsbF, PsbH, PsbI, PsbJ, PsbK, PsbL, PsbM, PsbT, PsbY, PsbZ, Psb30/Ycf12, at least 3 peripheral proteins of the oxygen-evolving complex and a large number of cofactors. It forms dimeric complexes.

It is found in the plastid. The protein resides in the chloroplast thylakoid membrane. May control the interaction of photosystem II (PSII) cores with the light-harvesting antenna, regulates electron flow through the 2 photosystem reaction centers. PSII is a light-driven water plastoquinone oxidoreductase, using light energy to abstract electrons from H(2)O, generating a proton gradient subsequently used for ATP formation. The sequence is that of Photosystem II reaction center protein Z from Nicotiana sylvestris (Wood tobacco).